Here is a 346-residue protein sequence, read N- to C-terminus: GPALPP motifs-containing protein 1 (346 aa).

Disordered regions lie at residues 1 to 283 and 289 to 308; these read MARD…ESLM and KLKS…IPFD. Ala2 is modified (N-acetylalanine). Residues 7–12 carry the GPALPP motif 1 motif; the sequence is GPALPP. Phosphoserine is present on Ser28. Residues 32 to 37 carry the GPALPP motif 2 motif; sequence GPALPP. Over residues 60–69 the composition is skewed to acidic residues; the sequence is GNQESEEEDT. The short motif at 91 to 96 is the GPALPP motif 3 element; that stretch reads GPALPP. Ser104 is modified (phosphoserine). Residues 106-115 are compositionally biased toward pro residues; the sequence is PRPIIGPALP. The GPALPP motif 4 motif lies at 111–116; the sequence is GPALPP. The segment covering 123-132 has biased composition (basic and acidic residues); that stretch reads QKNDKGREDP. Residues Ser136, Ser141, and Ser146 each carry the phosphoserine modification. Over residues 142–152 the composition is skewed to acidic residues; it reads EEAESGEDEDI. Basic and acidic residues-rich tracts occupy residues 169–193 and 233–267; these read EFEK…KPIT and PADR…KRLA. Lys277 participates in a covalent cross-link: Glycyl lysine isopeptide (Lys-Gly) (interchain with G-Cter in SUMO2). Residues 293 to 308 are compositionally biased toward basic and acidic residues; the sequence is KAAEDKNKHQERIPFD. A Glycyl lysine isopeptide (Lys-Gly) (interchain with G-Cter in SUMO2) cross-link involves residue Lys314.

The polypeptide is GPALPP motifs-containing protein 1 (Gpalpp1) (Mus musculus (Mouse)).